Here is a 643-residue protein sequence, read N- to C-terminus: MADVVKITFPDGAVKEFPKGVTTEDIAASISPGLKKKAIAGKLNERMIDLRTPIEEDGAISIITQDMPEALDILRHSTAHLMAQAVKRLYKDVKLGVGPVIENGFYYDIDVDVPITAEDLPKIEQEMKKIVKENLDIVRKEVSREEAIRRYEEIGDPLKIELINDIPEGEVVSIYEQGEFFDLCRGVHVPSTGKIKEFKLLSVAGAYWRGDSKNKMLQRIYGTAFFKKEDLDEYLRLLQEAKERDHRKLGKELDLFMTSQKVGQGLPLWLPKGATIRRTIERYIVDKELSLGYQHVYTPVLGSVELYKTSGHWDHYKDGMFPPMEMDNEQLVLRPMNCPHHMMVYKHKIHSYRELPIRIAELGTMHRYEMSGALTGLQRVRGMTLNDAHIFVRPDQIKDEFKRVVNLILDVYKDFGLTDYSFRLSYRDPQDKEKYYDDDAMWEKAQSMLKEAMDELGLDYYEAEGEAAFYGPKLDVQVRTALGKDETLSTVQLDFLLPERFDLTYIGEDGKPHRPVVIHRGVVSTMERFVAFLIEEYKGAFPTWLAPIQVQVIPVAPSIHMDYAYEVKHALQVAGIRVEVDEREEKIGYKIREAQMQKIPYMLVVGDNEVNERAVNVRKYGEQKSETMPLDAFVDSIAKEVRK.

The region spanning 3–64 is the TGS domain; the sequence is DVVKITFPDG…EEDGAISIIT (62 aa). The interval 245–542 is catalytic; it reads DHRKLGKELD…LIEEYKGAFP (298 aa). Zn(2+)-binding residues include Cys338, His389, and His519.

Belongs to the class-II aminoacyl-tRNA synthetase family. In terms of assembly, homodimer. Zn(2+) serves as cofactor.

It is found in the cytoplasm. It catalyses the reaction tRNA(Thr) + L-threonine + ATP = L-threonyl-tRNA(Thr) + AMP + diphosphate + H(+). In terms of biological role, catalyzes the attachment of threonine to tRNA(Thr) in a two-step reaction: L-threonine is first activated by ATP to form Thr-AMP and then transferred to the acceptor end of tRNA(Thr). Also edits incorrectly charged L-seryl-tRNA(Thr). This Anoxybacillus flavithermus (strain DSM 21510 / WK1) protein is Threonine--tRNA ligase.